The chain runs to 212 residues: 3,4-dihydroxy-2-butanone 4-phosphate synthase (212 aa).

Residues 37–38 (RE), D42, 150–154 (RRGHT), and E174 each bind D-ribulose 5-phosphate. Residue E38 participates in Mg(2+) binding. A Mg(2+)-binding site is contributed by H153.

Belongs to the DHBP synthase family. In terms of assembly, homodimer. It depends on Mg(2+) as a cofactor. Mn(2+) is required as a cofactor.

It catalyses the reaction D-ribulose 5-phosphate = (2S)-2-hydroxy-3-oxobutyl phosphate + formate + H(+). It participates in cofactor biosynthesis; riboflavin biosynthesis; 2-hydroxy-3-oxobutyl phosphate from D-ribulose 5-phosphate: step 1/1. Its function is as follows. Catalyzes the conversion of D-ribulose 5-phosphate to formate and 3,4-dihydroxy-2-butanone 4-phosphate. The protein is 3,4-dihydroxy-2-butanone 4-phosphate synthase of Shewanella pealeana (strain ATCC 700345 / ANG-SQ1).